The following is a 104-amino-acid chain: Large ribosomal subunit protein bL21 (104 aa).

Belongs to the bacterial ribosomal protein bL21 family. Part of the 50S ribosomal subunit. Contacts protein L20.

In terms of biological role, this protein binds to 23S rRNA in the presence of protein L20. The chain is Large ribosomal subunit protein bL21 from Streptococcus equi subsp. equi (strain 4047).